The following is a 111-amino-acid chain: Fertilization-influencing membrane protein (111 aa).

The signal sequence occupies residues 1 to 23 (MKLWLWVAVGVWMLMAELGTIET). Residues 85–105 (ILVGTLVVAFFFLLFQFCLHV) form a helical membrane-spanning segment.

As to expression, testis-specific.

It localises to the cell membrane. Its subcellular location is the secreted. In terms of biological role, plays a role in sperm-oocyte fusion process during fertilization. The polypeptide is Fertilization-influencing membrane protein (Mus musculus (Mouse)).